A 494-amino-acid chain; its full sequence is Inosine-5'-monophosphate dehydrogenase (494 aa).

2 consecutive CBS domains span residues 93 to 154 and 158 to 217; these read IIRN…NEKI and MTTD…CKDM. NAD(+)-binding positions include D251 and 301–303; that span reads GIG. Positions 303 and 305 each coordinate K(+). IMP is bound at residue S306. C308 serves as a coordination point for K(+). C308 (thioimidate intermediate) is an active-site residue. IMP-binding positions include 341–343, 364–365, and 388–392; these read DGG, GS, and YRGMG. The active-site Proton acceptor is R406. Residue E421 participates in IMP binding. Residues E475, S476, and H477 each contribute to the K(+) site.

The protein belongs to the IMPDH/GMPR family. In terms of assembly, homotetramer. K(+) is required as a cofactor.

It carries out the reaction IMP + NAD(+) + H2O = XMP + NADH + H(+). The protein operates within purine metabolism; XMP biosynthesis via de novo pathway; XMP from IMP: step 1/1. Mycophenolic acid (MPA) is a non-competitive inhibitor that prevents formation of the closed enzyme conformation by binding to the same site as the amobile flap. In contrast, mizoribine monophosphate (MZP) is a competitive inhibitor that induces the closed conformation. MPA is a potent inhibitor of mammalian IMPDHs but a poor inhibitor of the bacterial enzymes. MZP is a more potent inhibitor of bacterial IMPDH. Catalyzes the conversion of inosine 5'-phosphate (IMP) to xanthosine 5'-phosphate (XMP), the first committed and rate-limiting step in the de novo synthesis of guanine nucleotides, and therefore plays an important role in the regulation of cell growth. The chain is Inosine-5'-monophosphate dehydrogenase from Chlorobaculum parvum (strain DSM 263 / NCIMB 8327) (Chlorobium vibrioforme subsp. thiosulfatophilum).